We begin with the raw amino-acid sequence, 442 residues long: Probable alpha-galactosidase B (442 aa).

Positions 1–19 are cleaved as a signal peptide; the sequence is MQRYISLSVSLSLLSGANA. Disulfide bonds link cysteine 42–cysteine 74 and cysteine 124–cysteine 154. The active-site Nucleophile is the aspartate 152. N-linked (GlcNAc...) asparagine glycosylation is found at asparagine 159, asparagine 173, asparagine 179, and asparagine 215. 224 to 228 contacts substrate; the sequence is EWGQA. Residue asparagine 235 is glycosylated (N-linked (GlcNAc...) asparagine). The active-site Proton donor is the aspartate 246. Asparagine 285 carries N-linked (GlcNAc...) asparagine glycosylation.

The protein belongs to the glycosyl hydrolase 27 family.

It is found in the secreted. It carries out the reaction Hydrolysis of terminal, non-reducing alpha-D-galactose residues in alpha-D-galactosides, including galactose oligosaccharides, galactomannans and galactolipids.. Functionally, hydrolyzes a variety of simple alpha-D-galactoside as well as more complex molecules such as oligosaccharides and polysaccharides. This is Probable alpha-galactosidase B (aglB) from Aspergillus oryzae (strain ATCC 42149 / RIB 40) (Yellow koji mold).